The primary structure comprises 425 residues: Tyrosine--tRNA ligase (425 aa).

Tyr-37 is an L-tyrosine binding site. A 'HIGH' region motif is present at residues Pro-42–His-51. The L-tyrosine site is built by Tyr-175 and Gln-179. The 'KMSKS' region signature appears at Lys-235–Thr-239. Lys-238 contacts ATP. Residues Gln-357–Lys-415 form the S4 RNA-binding domain.

This sequence belongs to the class-I aminoacyl-tRNA synthetase family. TyrS type 1 subfamily. In terms of assembly, homodimer.

Its subcellular location is the cytoplasm. It catalyses the reaction tRNA(Tyr) + L-tyrosine + ATP = L-tyrosyl-tRNA(Tyr) + AMP + diphosphate + H(+). Catalyzes the attachment of tyrosine to tRNA(Tyr) in a two-step reaction: tyrosine is first activated by ATP to form Tyr-AMP and then transferred to the acceptor end of tRNA(Tyr). The sequence is that of Tyrosine--tRNA ligase from Erwinia tasmaniensis (strain DSM 17950 / CFBP 7177 / CIP 109463 / NCPPB 4357 / Et1/99).